The sequence spans 135 residues: MSYAELIEEQKEETRDIIAALLEDGSEPEALYTIEHHFSADTFAELEAAAVEAFKMGFEVLEAEELELAPEDGGGKVVCFDAVMESALNAELIDEQTEKLIALADKHDIDYDGWGTYFESDEDDEEDESEDKPEA.

The interval 114–135 (WGTYFESDEDDEEDESEDKPEA) is disordered. The segment covering 119–135 (ESDEDDEEDESEDKPEA) has biased composition (acidic residues).

This sequence belongs to the RraB family. In terms of assembly, interacts with the C-terminal region of Rne.

It is found in the cytoplasm. Functionally, globally modulates RNA abundance by binding to RNase E (Rne) and regulating its endonucleolytic activity. Can modulate Rne action in a substrate-dependent manner by altering the composition of the degradosome. The polypeptide is Regulator of ribonuclease activity B (Photobacterium profundum (strain SS9)).